Reading from the N-terminus, the 262-residue chain is Short-chain Z-isoprenyl diphosphate synthase (262 aa).

Asp40 is an active-site residue. Mg(2+) is bound at residue Asp40. Substrate contacts are provided by residues 41–44 (GNRR), Trp45, and 86–88 (STE). Asn89 (proton acceptor) is an active-site residue. Residues Arg92, Arg211, and 217-219 (RLS) contribute to the substrate site. Residue Glu230 participates in Mg(2+) binding.

The protein belongs to the UPP synthase family. Z-FPP synthase subfamily. It depends on Mg(2+) as a cofactor.

It catalyses the reaction isopentenyl diphosphate + (2E)-geranyl diphosphate = (2Z,6E)-farnesyl diphosphate + diphosphate. The protein operates within phospholipid metabolism; decaprenyl phosphate biosynthesis. In terms of biological role, generates Z-farnesyl diphosphate (Z-FPP) from isopentenyl pyrophosphate (IPP). Z-FPP is the precursor of decaprenyl diphosphate, which has a central role in the biosynthesis of the mycobacterial cell wall. This is Short-chain Z-isoprenyl diphosphate synthase from Mycobacterium leprae (strain TN).